A 299-amino-acid polypeptide reads, in one-letter code: Ribonuclease H2 subunit A (299 aa).

Methionine 1 carries the post-translational modification N-acetylmethionine. The RNase H type-2 domain maps to 28–250; it reads PCVLGVDEAG…AQTILEKEAE (223 aa). Aspartate 34, glutamate 35, and aspartate 141 together coordinate a divalent metal cation. A phosphothreonine mark is found at threonine 204 and threonine 216. Phosphoserine is present on residues serine 257 and serine 277.

It belongs to the RNase HII family. Eukaryotic subfamily. In terms of assembly, the RNase H2 complex is a heterotrimer composed of the catalytic subunit RNASEH2A and the non-catalytic subunits RNASEH2B and RNASEH2C. Mn(2+) serves as cofactor. Mg(2+) is required as a cofactor.

The protein localises to the nucleus. It carries out the reaction Endonucleolytic cleavage to 5'-phosphomonoester.. Catalytic subunit of RNase HII, an endonuclease that specifically degrades the RNA of RNA:DNA hybrids. Participates in DNA replication, possibly by mediating the removal of lagging-strand Okazaki fragment RNA primers during DNA replication. Mediates the excision of single ribonucleotides from DNA:RNA duplexes. The chain is Ribonuclease H2 subunit A (RNASEH2A) from Homo sapiens (Human).